The chain runs to 271 residues: MLTIDKLTKRFGEKTAVDAATIRVEKPTMIGIIGRSGAGKSTLLRMLNCLSSASEGTITFEGEEITGLRGAARRNWQSRCAMIFQQFNLVPRMDVVSNVLHGTLNKRSTFATMFNLYPQSDIHRAIEILDRLGIAEQAAKRAEALSGGQQQRVAIARALMQNPKIILADEPIASLDPMNAQVVMQALRRIHEEDGRMVIANLHTLDTARRYCDRVIGMRDGRIVFDGTPAQLTTGVARDIYGAGAGFSEAATSTEIDALDKPDIPTAKAYA.

The ABC transporter domain occupies 2 to 245 (LTIDKLTKRF…VARDIYGAGA (244 aa)). 34 to 41 (GRSGAGKS) contacts ATP.

The protein belongs to the ABC transporter superfamily. Phosphonates importer (TC 3.A.1.9.1) family. As to quaternary structure, the complex is composed of two ATP-binding proteins (PhnC), two transmembrane proteins (PhnE) and a solute-binding protein (PhnD).

It localises to the cell inner membrane. The enzyme catalyses phosphonate(out) + ATP + H2O = phosphonate(in) + ADP + phosphate + H(+). Functionally, part of the ABC transporter complex PhnCDE involved in phosphonates import. Responsible for energy coupling to the transport system. The sequence is that of Phosphonates import ATP-binding protein PhnC 2 from Roseobacter denitrificans (strain ATCC 33942 / OCh 114) (Erythrobacter sp. (strain OCh 114)).